We begin with the raw amino-acid sequence, 67 residues long: MNNWIFAILMLGVAIVLSIIATFFKQIFTIFKRRKKKEPVWVTVTNAEYLDRDFWKGKEQKDKKEHD.

Residues 4–24 (WIFAILMLGVAIVLSIIATFF) form a helical membrane-spanning segment.

The protein resides in the membrane. This is an uncharacterized protein from Bacillus anthracis.